The primary structure comprises 365 residues: DNA replication and repair protein RecF (365 aa).

ATP is bound at residue 30-37 (GDNGEGKT).

The protein belongs to the RecF family.

It is found in the cytoplasm. The RecF protein is involved in DNA metabolism; it is required for DNA replication and normal SOS inducibility. RecF binds preferentially to single-stranded, linear DNA. It also seems to bind ATP. The protein is DNA replication and repair protein RecF of Leptospira borgpetersenii serovar Hardjo-bovis (strain JB197).